The primary structure comprises 294 residues: Methionine aminopeptidase (294 aa).

His-65 serves as a coordination point for substrate. Residues Asp-85, Asp-96, and His-156 each contribute to the a divalent metal cation site. A substrate-binding site is contributed by His-164. Glu-189 and Glu-279 together coordinate a divalent metal cation.

This sequence belongs to the peptidase M24A family. Methionine aminopeptidase archaeal type 2 subfamily. As to quaternary structure, monomer. It depends on Co(2+) as a cofactor. The cofactor is Zn(2+). Mn(2+) is required as a cofactor. Fe(2+) serves as cofactor.

The catalysed reaction is Release of N-terminal amino acids, preferentially methionine, from peptides and arylamides.. In terms of biological role, removes the N-terminal methionine from nascent proteins. The N-terminal methionine is often cleaved when the second residue in the primary sequence is small and uncharged (Met-Ala-, Cys, Gly, Pro, Ser, Thr, or Val). This chain is Methionine aminopeptidase, found in Methanocaldococcus jannaschii (strain ATCC 43067 / DSM 2661 / JAL-1 / JCM 10045 / NBRC 100440) (Methanococcus jannaschii).